A 154-amino-acid chain; its full sequence is Ascorbate-specific PTS system EIIA component (154 aa).

A PTS EIIA type-2 domain is found at 6-150 (SLAENKSIRL…QEVLDLIDRT (145 aa)). Residue His-68 is the Tele-phosphohistidine intermediate of the active site. His-68 bears the Phosphohistidine mark.

The protein localises to the cytoplasm. In terms of biological role, the phosphoenolpyruvate-dependent sugar phosphotransferase system (sugar PTS), a major carbohydrate active transport system, catalyzes the phosphorylation of incoming sugar substrates concomitantly with their translocation across the cell membrane. The enzyme II UlaABC PTS system is involved in ascorbate transport. This Shigella flexneri protein is Ascorbate-specific PTS system EIIA component (ulaC).